Reading from the N-terminus, the 399-residue chain is F-box protein At1g30790 (399 aa).

An F-box domain is found at 3–49 (RQEIDHIPFDLTVEILTRLPAKSLMKFKCVSKLWSSIIHNQSFIDSF).

The protein is F-box protein At1g30790 of Arabidopsis thaliana (Mouse-ear cress).